Consider the following 219-residue polypeptide: Pyridoxine/pyridoxamine 5'-phosphate oxidase (219 aa).

The segment at 1–23 is disordered; that stretch reads MTSSVIPPSPSAADYAAEGDRPL. Residues 66–71, 81–82, Lys88, and Gln110 each bind FMN; these read RIVLLK and FT. Residue Lys71 participates in substrate binding. The substrate site is built by Tyr128, Arg132, and Ser136. FMN-binding positions include 145-146 and Trp191; that span reads QS. Substrate is bound at residue 197–199; the sequence is RMH. Arg201 is an FMN binding site.

It belongs to the pyridoxamine 5'-phosphate oxidase family. As to quaternary structure, homodimer. It depends on FMN as a cofactor.

It catalyses the reaction pyridoxamine 5'-phosphate + O2 + H2O = pyridoxal 5'-phosphate + H2O2 + NH4(+). The catalysed reaction is pyridoxine 5'-phosphate + O2 = pyridoxal 5'-phosphate + H2O2. It participates in cofactor metabolism; pyridoxal 5'-phosphate salvage; pyridoxal 5'-phosphate from pyridoxamine 5'-phosphate: step 1/1. The protein operates within cofactor metabolism; pyridoxal 5'-phosphate salvage; pyridoxal 5'-phosphate from pyridoxine 5'-phosphate: step 1/1. Functionally, catalyzes the oxidation of either pyridoxine 5'-phosphate (PNP) or pyridoxamine 5'-phosphate (PMP) into pyridoxal 5'-phosphate (PLP). The chain is Pyridoxine/pyridoxamine 5'-phosphate oxidase from Hyphomonas neptunium (strain ATCC 15444).